The chain runs to 260 residues: Nuclear shuttle protein (260 aa).

Residues 1–29 (MRRGAYTPRSTPFPRDRRSYNAGKGRSFR) form a disordered region. Positions 21-42 (NAGKGRSFRSYRRRGPVRPLAR) match the Bipartite nuclear localization signal motif. The Nuclear localization signal signature appears at 84–100 (VKTRALSDNRVGDYIKL). Residues 154–191 (QLFGSINASYADLSIQDPYKDRFTVIRQVSYPVNTEKG) are interaction with Arabidopsis thaliana NSI protein.

The protein belongs to the begomovirus nuclear shuttle protein family. Binds to single-stranded and double-stranded viral DNA. Interacts with the host nuclear shuttle interacting (NSI) protein. This interaction may allow NSP to recruit NSI monomers to the viral genome and thus regulate nuclear export of viral genome by NSP.

Its subcellular location is the host nucleus. It localises to the host cytoplasm. The protein localises to the host cell membrane. Its function is as follows. Binds to the genomic viral ssDNA, shuttles it into and out of the cell nucleus. Begomoviruses use 2 proteins to transport their DNA from cell to cell. The nuclear shuttle protein (NSP) shuttles it between nucleus and cytoplasm and the movement protein (MP) probably transports the DNA-NSP complex to the cell periphery and facilitates movement across the cell wall. The protein is Nuclear shuttle protein of Indian cassava mosaic virus (ICMV).